We begin with the raw amino-acid sequence, 356 residues long: Magnesium-protoporphyrin IX monomethyl ester [oxidative] cyclase (356 aa).

This sequence belongs to the AcsF family. Fe cation is required as a cofactor.

It catalyses the reaction Mg-protoporphyrin IX 13-monomethyl ester + 3 NADPH + 3 O2 + 2 H(+) = 3,8-divinyl protochlorophyllide a + 3 NADP(+) + 5 H2O. Its pathway is porphyrin-containing compound metabolism; chlorophyll biosynthesis (light-independent). Its function is as follows. Catalyzes the formation of the isocyclic ring in chlorophyll biosynthesis. Mediates the cyclase reaction, which results in the formation of divinylprotochlorophyllide (Pchlide) characteristic of all chlorophylls from magnesium-protoporphyrin IX 13-monomethyl ester (MgPMME). The polypeptide is Magnesium-protoporphyrin IX monomethyl ester [oxidative] cyclase (Synechococcus sp. (strain CC9605)).